We begin with the raw amino-acid sequence, 209 residues long: uncharacterized protein (209 aa).

The first 17 residues, 1-17, serve as a signal peptide directing secretion; sequence MKRLVTGLLALSLFLAA. The segment at 17-105 is disordered; that stretch reads ACGQDSDQQK…SNNQANNNQK (89 aa). C18 carries the N-palmitoyl cysteine lipid modification. C18 is lipidated: S-diacylglycerol cysteine. Basic and acidic residues predominate over residues 23-70; the sequence is DQQKDSNKEKDDKAKTEQQDEKTNDSSKDKKDKKDDSKDVNKDNKDNS. The segment covering 71 to 105 has biased composition (low complexity); it reads ANDNQQQSNSNATNNDQNQTNNNQSSNNQANNNQK.

It localises to the cell membrane. This is an uncharacterized protein from Staphylococcus aureus (strain bovine RF122 / ET3-1).